An 839-amino-acid polypeptide reads, in one-letter code: Oxidation resistance protein 1 (839 aa).

Residues 38 to 91 (DYLREPAPGDPGCGPGELRPPSPTSPEGPDTGQKKTLDKKDGRRMSFQKPKGTI) form a disordered region. Over residues 69-81 (GQKKTLDKKDGRR) the composition is skewed to basic and acidic residues. Residue Ser83 is modified to Phosphoserine. The LysM domain maps to 91-134 (IEYTVESRDSLNSIALKFDTTPNELVQLNKLFSRAVVTGQVLYV). Thr111 is modified (phosphothreonine). The span at 140–161 (VSSVESSPSLSPVSPLSPTSSE) shows a compositional bias: low complexity. Positions 140 to 195 (VSSVESSPSLSPVSPLSPTSSEAEFDKTTTPDVVHPKEAPPSSTESSIRPARVVSS) are disordered. Residues 163-177 (EFDKTTTPDVVHPKE) are compositionally biased toward basic and acidic residues. Residues Ser194, Ser195, and Ser197 each carry the phosphoserine modification. In terms of domain architecture, GRAM spans 206–261 (KFLKINCKYITNGKGTVSGVLLVTPNNIMFDPHKTDPLVQENGCEEYGIMCPMEEV). Residues Ser287, Ser327, and Ser329 each carry the phosphoserine modification. Disordered regions lie at residues 292–401 (CHSK…VGAL) and 415–540 (KEGD…SLLK). Position 334 is a phosphothreonine (Thr334). At Ser339 the chain carries Phosphoserine. The span at 340-356 (PIREELPSSELRQEKSS) shows a compositional bias: basic and acidic residues. Composition is skewed to polar residues over residues 357–378 (DASS…TAAS) and 387–397 (TNANSGRSSSE). Basic and acidic residues-rich tracts occupy residues 433–450 (QSTD…HHEN) and 469–497 (LTEK…ELRK). Ser488 carries the post-translational modification Phosphoserine. Residues 502-519 (HSMQQAKQQRDTIQQVAQ) are compositionally biased toward polar residues. Residues 543–570 (RRHRLHKFLCLRVGKPMRKTFVSQASAT) are mediates oxidative antimutator activity. A disordered region spans residues 648-677 (TREDINSKQAAPAKADLEPESFRPNLSDPS). The region spanning 678 to 839 (ELLLPDQIEK…IQDIEIWAFE (162 aa)) is the TLDc domain.

Belongs to the OXR1 family.

The protein resides in the mitochondrion. In terms of biological role, may be involved in protection from oxidative damage. The polypeptide is Oxidation resistance protein 1 (Oxr1) (Rattus norvegicus (Rat)).